A 361-amino-acid polypeptide reads, in one-letter code: UDP-3-O-acylglucosamine N-acyltransferase (361 aa).

The active-site Proton acceptor is the H258.

The protein belongs to the transferase hexapeptide repeat family. LpxD subfamily. Homotrimer.

The enzyme catalyses a UDP-3-O-[(3R)-3-hydroxyacyl]-alpha-D-glucosamine + a (3R)-hydroxyacyl-[ACP] = a UDP-2-N,3-O-bis[(3R)-3-hydroxyacyl]-alpha-D-glucosamine + holo-[ACP] + H(+). It functions in the pathway bacterial outer membrane biogenesis; LPS lipid A biosynthesis. Functionally, catalyzes the N-acylation of UDP-3-O-acylglucosamine using 3-hydroxyacyl-ACP as the acyl donor. Is involved in the biosynthesis of lipid A, a phosphorylated glycolipid that anchors the lipopolysaccharide to the outer membrane of the cell. The protein is UDP-3-O-acylglucosamine N-acyltransferase of Nitrobacter hamburgensis (strain DSM 10229 / NCIMB 13809 / X14).